The following is a 382-amino-acid chain: GDSL esterase/lipase At4g01130 (382 aa).

Positions 1-28 (MASDINRRRSFSLLVLIIVMLYGHKGDS) are cleaved as a signal peptide. Serine 41 acts as the Nucleophile in catalysis. Asparagine 118, asparagine 263, asparagine 275, and asparagine 330 each carry an N-linked (GlcNAc...) asparagine glycan. Catalysis depends on residues aspartate 348 and histidine 351.

It belongs to the 'GDSL' lipolytic enzyme family.

The protein resides in the secreted. This is GDSL esterase/lipase At4g01130 from Arabidopsis thaliana (Mouse-ear cress).